The primary structure comprises 646 residues: Threonine--tRNA ligase (646 aa).

Positions 1-63 constitute a TGS domain; sequence MAQISLTFPD…ETDAKIAIHT (63 aa). The catalytic stretch occupies residues 247-544; the sequence is DHRKLGREME…LIENYAGKLP (298 aa). Zn(2+) is bound by residues Cys344, His395, and His521.

The protein belongs to the class-II aminoacyl-tRNA synthetase family. Homodimer. Zn(2+) is required as a cofactor.

The protein resides in the cytoplasm. It carries out the reaction tRNA(Thr) + L-threonine + ATP = L-threonyl-tRNA(Thr) + AMP + diphosphate + H(+). Functionally, catalyzes the attachment of threonine to tRNA(Thr) in a two-step reaction: L-threonine is first activated by ATP to form Thr-AMP and then transferred to the acceptor end of tRNA(Thr). Also edits incorrectly charged L-seryl-tRNA(Thr). The protein is Threonine--tRNA ligase of Cereibacter sphaeroides (strain ATCC 17023 / DSM 158 / JCM 6121 / CCUG 31486 / LMG 2827 / NBRC 12203 / NCIMB 8253 / ATH 2.4.1.) (Rhodobacter sphaeroides).